The primary structure comprises 228 residues: Ribose-5-phosphate isomerase A (228 aa).

Substrate contacts are provided by residues Thr31 to Thr34, Asp85 to Asp88, and Lys97 to Gly100. Glu106 serves as the catalytic Proton acceptor. A substrate-binding site is contributed by Lys124.

It belongs to the ribose 5-phosphate isomerase family. In terms of assembly, homodimer.

The enzyme catalyses aldehydo-D-ribose 5-phosphate = D-ribulose 5-phosphate. Its pathway is carbohydrate degradation; pentose phosphate pathway; D-ribose 5-phosphate from D-ribulose 5-phosphate (non-oxidative stage): step 1/1. Functionally, catalyzes the reversible conversion of ribose-5-phosphate to ribulose 5-phosphate. This Haloarcula marismortui (strain ATCC 43049 / DSM 3752 / JCM 8966 / VKM B-1809) (Halobacterium marismortui) protein is Ribose-5-phosphate isomerase A.